Consider the following 337-residue polypeptide: MDLQEAAMEARNGHRIPPTEEKVIIDTDPGIDDSVAIMMAFEAPGVKVVGLTTIFGNCTTSHATRNALILCDRAGRPEVPVAEGSAEPLKGGKPHVADFVHGSDGLGNTSFPDPTTTNKVEQSAAEFLVDKVSESPGEISVLALGPLTNIALAMKKDSSFASKVKRIVVLGGAFFAAGNATPSAEANIHSDPEAADIVFTSGADIYVVGLNITTQVYFTDKDMLELRNSKGKHAQFLCDICKFYRDWHVHSYGVDALFLHDPVSFTALVHPEYFTFKKGVVRVETQGICKGHTSMDMGLKKWNSDNPWTGYSPISVAWTVDVPKVLAYAKELLFNAQ.

H260 is a catalytic residue.

It belongs to the IUNH family.

It localises to the cytoplasm. The catalysed reaction is uridine + H2O = D-ribose + uracil. Functionally, involved in pyrimidine breakdown. The chain is Probable uridine nucleosidase 2 (URH2) from Oryza sativa subsp. japonica (Rice).